The following is a 515-amino-acid chain: Forkhead box protein H1 (515 aa).

The interval 55-103 (YREGGTWSPDRGSMHGLSPGTQEGSCTQAEGTKDSLGGDETLSRKSKKK) is disordered. The span at 73–84 (PGTQEGSCTQAE) shows a compositional bias: polar residues. The segment at residues 110–206 (KPPYSYLAMI…MKLQNTALTR (97 aa)) is a DNA-binding region (fork-head). The interval 307–399 (YPQSKPTRNG…EPPKKMPLLS (93 aa)) is disordered. A compositionally biased stretch (low complexity) spans 322-339 (SASHSTYSSSSSSISTIS). Residues 375-388 (STPSSDTDAGNYSP) are compositionally biased toward polar residues. Positions 377 to 503 (PSSDTDAGNY…PSFLGQCLGS (127 aa)) are SMAD-interaction domain (SID). Positions 402–406 (LPTSY) match the Fast/FoxH1 motif 1 (FM1) motif. The Fast/FoxH1 motif 2 (FM2) signature appears at 412–418 (PNVVAPP). The SMAD-interaction motif (SIM) signature appears at 467-488 (LDNMLKTVPPNKSVFDVLTSHP).

In terms of assembly, ARF1 contains 2 smad2s, 1 smad4 and 1 foxh1/fast-1 protein. Interaction with smad4 is most likely indirect through interaction with the MH2 domain of smad2. Binds to the MH2 domain of smad3, which can incorporate into the ARF1 complex. The ARF1 and ARF2 complexes are activated by distinct TGF-beta family members; formation of ARF1 is promoted by activin. Interacts (via Fork-head domain) with gtf2ird1/wbscr11 (via repeats 4-5).

Its subcellular location is the nucleus. Transcriptional activator. Recognizes and binds to the DNA sequence 5'-TGT[GT][GT]ATT-3'. Upon TGF-beta induction, forms a transcriptionally active complex with smad2 and smad4 called activin-responsive factor 1 (ARF1), which binds a site on the mix-B/mix.2 promoter called the activin response element (ARE). Binds to activated smads and the ARE with much lower affinity than fast3. Necessary for the first steps in mesoderm specification, directly inducing mesodermal genes. Acts with fast3 to control the convergent extension movements of gastrulation. Binds to the proximal element (PE) of the gsc gene and cooperates with gtf2ird1/wbscr11 and SMAD proteins to regulate gsc transcription. This is Forkhead box protein H1 from Xenopus tropicalis (Western clawed frog).